Reading from the N-terminus, the 448-residue chain is Iroquois-class homeodomain protein irx-3 (448 aa).

Positions 108–170 (DPSRPKNATR…NARRRLKKEN (63 aa)) form a DNA-binding region, homeobox; TALE-type. 2 disordered regions span residues 171 to 250 (KMTW…NAPE) and 387 to 410 (SGTA…DRSS). Residues 195-222 (KHEDDEEIDLENIDTEDIESKEDLDDPD) show a composition bias toward acidic residues. A compositionally biased stretch (basic and acidic residues) spans 223–237 (TDIHSDSKTDARSDS). Positions 238–248 (EASDGFEDLNA) are enriched in acidic residues. The span at 396 to 406 (AEPKHSTDSLT) shows a compositional bias: basic and acidic residues.

This sequence belongs to the TALE/IRO homeobox family. In terms of tissue distribution, expressed in the neural plate in overlapping patterns with other irx members, which all share an anterior border of expression. Outside the nervous system and at tailbud stages, expressed in the developing otic vesicle, branchial arches, prospective heart region and pronephros.

It is found in the nucleus. In terms of biological role, acts partially redundantly with other irx members in neural patterning. Required for formation of the posterior forebrain, midbrain, hindbrain, and to a lesser extent, spinal cord. Both up-regulates and down-regulates gene expression during neural development. Acts early in neural plate development to induce proneural gene expression and specify a neural precursor state. Also up-regulates repressors that prevent neuronal differentiation. Required during at least two stages of pronephros kidney development; during neurula stages, maintains transcription of key renal genes to define the size and identity of the pronephric anlage, probably in part through regulation of bmp-signaling. Subsequently required for proper formation of the intermediate tubule segment of the pronephros. The chain is Iroquois-class homeodomain protein irx-3 from Xenopus tropicalis (Western clawed frog).